Consider the following 567-residue polypeptide: Urease subunit alpha (567 aa).

Residues 129–567 (GGIDSHIHFI…LPMAQRYFLF (439 aa)) form the Urease domain. Ni(2+)-binding residues include His-134, His-136, and Lys-217. N6-carboxylysine is present on Lys-217. Substrate is bound at residue His-219. The Ni(2+) site is built by His-246 and His-272. The active-site Proton donor is the His-320. Ni(2+) is bound at residue Asp-360.

The protein belongs to the metallo-dependent hydrolases superfamily. Urease alpha subunit family. In terms of assembly, heterotrimer of UreA (gamma), UreB (beta) and UreC (alpha) subunits. Three heterotrimers associate to form the active enzyme. Ni cation is required as a cofactor. In terms of processing, carboxylation allows a single lysine to coordinate two nickel ions.

Its subcellular location is the cytoplasm. It carries out the reaction urea + 2 H2O + H(+) = hydrogencarbonate + 2 NH4(+). Its pathway is nitrogen metabolism; urea degradation; CO(2) and NH(3) from urea (urease route): step 1/1. This chain is Urease subunit alpha, found in Alcanivorax borkumensis (strain ATCC 700651 / DSM 11573 / NCIMB 13689 / SK2).